The following is a 307-amino-acid chain: Ornithine carbamoyltransferase (307 aa).

Residues 56–59, Gln83, Arg107, and 134–137 contribute to the carbamoyl phosphate site; these read STRT and HPCQ. L-ornithine contacts are provided by residues Asn165, Asp223, and 227–228; that span reads SM. Carbamoyl phosphate-binding positions include 263–264 and Arg291; that span reads CL.

The protein belongs to the aspartate/ornithine carbamoyltransferase superfamily. OTCase family.

The protein localises to the cytoplasm. It carries out the reaction carbamoyl phosphate + L-ornithine = L-citrulline + phosphate + H(+). Its pathway is amino-acid degradation; L-arginine degradation via ADI pathway; carbamoyl phosphate from L-arginine: step 2/2. Its function is as follows. Reversibly catalyzes the transfer of the carbamoyl group from carbamoyl phosphate (CP) to the N(epsilon) atom of ornithine (ORN) to produce L-citrulline. This Cupriavidus taiwanensis (strain DSM 17343 / BCRC 17206 / CCUG 44338 / CIP 107171 / LMG 19424 / R1) (Ralstonia taiwanensis (strain LMG 19424)) protein is Ornithine carbamoyltransferase.